A 398-amino-acid chain; its full sequence is Lymphocyte transmembrane adapter 1 (398 aa).

Residues 1–37 are Extracellular-facing; the sequence is MDGVTPTLSTIRGRTLESSTLHVTPRSLDRNKDQITN. Residues 38–58 form a helical; Signal-anchor for type III membrane protein membrane-spanning segment; the sequence is IFSGFAGLLAILLVVAVFCIL. At 59–398 the chain is on the cytoplasmic side; it reads WNWNKRKKRQ…GPGTQLLPDE (340 aa). Position 193 is a phosphotyrosine (tyrosine 193). Residues 228-261 form a disordered region; that stretch reads TEERDEGCGDAGDCTSLYSPGAEDSDSLSNGEGS. A phosphotyrosine mark is found at tyrosine 268 and tyrosine 294. The tract at residues 298–330 is disordered; that stretch reads PAADPSGSQQQAEKDVPSSNIGHVEDKTDDPGT. Residues 303-318 show a composition bias toward polar residues; sequence SGSQQQAEKDVPSSNI. Basic and acidic residues predominate over residues 320 to 329; the sequence is HVEDKTDDPG. 2 positions are modified to phosphotyrosine: tyrosine 345 and tyrosine 373. The interval 347–398 is disordered; the sequence is DFQPFTQSEDSQMKHREEMSNEDSSDYENVLTAKLGGRDSEQGPGTQLLPDE.

When phosphorylated, interacts with GRB2, PIK3R1 and GRAP2. Post-translationally, phosphorylated on tyrosines by Syk, Lck or ZAP70 upon TCR or BCR activation; which leads to the recruitment of GRB2, PIK3R1 and GRAP2. Expressed in spleen, thymus, and peripheral blood leukocytes. Expressed in several B-, T-, NK and monocyte cell lines.

Its subcellular location is the cell membrane. In terms of biological role, negatively regulates TCR (T-cell antigen receptor)-mediated signaling in T-cells and BCR (B-cell antigen receptor)-mediated signaling in B-cells. This Homo sapiens (Human) protein is Lymphocyte transmembrane adapter 1 (LAX1).